The sequence spans 238 residues: Small ribosomal subunit protein uS2 (238 aa).

The protein belongs to the universal ribosomal protein uS2 family.

In Moorella thermoacetica (strain ATCC 39073 / JCM 9320), this protein is Small ribosomal subunit protein uS2.